The following is a 159-amino-acid chain: Ribosomal RNA large subunit methyltransferase H (159 aa).

S-adenosyl-L-methionine-binding residues include Leu-76 and Gly-108.

The protein belongs to the RNA methyltransferase RlmH family. As to quaternary structure, homodimer.

The protein resides in the cytoplasm. It carries out the reaction pseudouridine(1915) in 23S rRNA + S-adenosyl-L-methionine = N(3)-methylpseudouridine(1915) in 23S rRNA + S-adenosyl-L-homocysteine + H(+). Its function is as follows. Specifically methylates the pseudouridine at position 1915 (m3Psi1915) in 23S rRNA. In Limosilactobacillus fermentum (strain NBRC 3956 / LMG 18251) (Lactobacillus fermentum), this protein is Ribosomal RNA large subunit methyltransferase H.